A 492-amino-acid polypeptide reads, in one-letter code: Protein nucleotidyltransferase YdiU (492 aa).

Positions 94, 96, 97, 117, 129, 130, 180, and 187 each coordinate ATP. Asp257 acts as the Proton acceptor in catalysis. Residues Asn258 and Asp267 each contribute to the Mg(2+) site. Asp267 is an ATP binding site.

The protein belongs to the SELO family. Mg(2+) is required as a cofactor. The cofactor is Mn(2+).

The catalysed reaction is L-seryl-[protein] + ATP = 3-O-(5'-adenylyl)-L-seryl-[protein] + diphosphate. It carries out the reaction L-threonyl-[protein] + ATP = 3-O-(5'-adenylyl)-L-threonyl-[protein] + diphosphate. The enzyme catalyses L-tyrosyl-[protein] + ATP = O-(5'-adenylyl)-L-tyrosyl-[protein] + diphosphate. It catalyses the reaction L-histidyl-[protein] + UTP = N(tele)-(5'-uridylyl)-L-histidyl-[protein] + diphosphate. The catalysed reaction is L-seryl-[protein] + UTP = O-(5'-uridylyl)-L-seryl-[protein] + diphosphate. It carries out the reaction L-tyrosyl-[protein] + UTP = O-(5'-uridylyl)-L-tyrosyl-[protein] + diphosphate. In terms of biological role, nucleotidyltransferase involved in the post-translational modification of proteins. It can catalyze the addition of adenosine monophosphate (AMP) or uridine monophosphate (UMP) to a protein, resulting in modifications known as AMPylation and UMPylation. The polypeptide is Protein nucleotidyltransferase YdiU (Halalkalibacterium halodurans (strain ATCC BAA-125 / DSM 18197 / FERM 7344 / JCM 9153 / C-125) (Bacillus halodurans)).